We begin with the raw amino-acid sequence, 197 residues long: Recombination protein RecR (197 aa).

The C4-type zinc-finger motif lies at 57 to 72; it reads CSTCFGITESDPCHLC. A Toprim domain is found at 79-174; the sequence is ASICVVEEPQ…KVTRLAHGIP (96 aa).

The protein belongs to the RecR family.

In terms of biological role, may play a role in DNA repair. It seems to be involved in an RecBC-independent recombinational process of DNA repair. It may act with RecF and RecO. In Geotalea uraniireducens (strain Rf4) (Geobacter uraniireducens), this protein is Recombination protein RecR.